The primary structure comprises 512 residues: MAGGIIQLVAYGIQDLYLTGDPQITFFKVVYRRHTNFSVESIIQNFTSVPDFGSTVSCTLSKSGDMINKIYVYIELPSVNVFYDESGNLDKFKKFAWVRNIGYALIKDVSIEIGGKLIDKQYGEWMYIWSQVTNKSDEGLDKMIGNIPLLYDFSNGKPKYSLYVPLEFWFCRNSGLSLPLVALSSSEVKITISFRSAEECYRIGPTHSIEIMEDIVPFEFGDYIEQKIGQKTIHGLYMGYDYMTKKLYYIKIHSPTAIKKSFESQQLRNSTSQRENYRIYNSLTGSYCTPKPDHSEMSEPTELSQKLHFINAYLYVDYVYLDNDERMMLIKNPQEYLIEQIQYNQEINVKNSNVKQKLTLNHPCKAHYWVVQSDSLVGPGTINDVFNFTTSHIRNHDGRTIGENPVTKSKLMLNSRERFKQRDGKYFNIVQPYQHHYRGPDTGINMYSVSINSQCHQPSSTINMSRIDDISMEMQLKNVNPNNTHKIRSYTTSYNILRVCFNIGGLAFESMD.

The protein belongs to the NCLDV major capsid protein family.

It localises to the virion. In Acanthamoeba polyphaga mimivirus (APMV), this protein is Probable capsid protein 4.